Consider the following 216-residue polypeptide: MELSRIPEGLVCSSGRPYHAKACFKATLHGFCPPFVLQQALKELLTPVLYDQFYCETPLSQKKAHVHRCRNRCVTFYWHCHCSSANSLQCAAAKKVANSVFYHSFIVMQNDNKMCPVPVCCDTWACIPFKPLGIVKQRRCTCYFFVMGGKFETEVLHVASEYSVKFLPFKPNVEIVCVICSCVDSPESCLKRVRRMMNCLRMVMCCSFVNADALQR.

In Pantherophis guttatus (Corn snake), this protein is Protein E4.2.